Here is a 606-residue protein sequence, read N- to C-terminus: UvrABC system protein C (606 aa).

The 79-residue stretch at 18–96 (SQPGVYRMMN…IKSLNPRYNI (79 aa)) folds into the GIY-YIG domain. One can recognise a UVR domain in the interval 205–240 (TEVLKSITRKMHEAAEEQEYEQAALFRDQIQSLRKI).

This sequence belongs to the UvrC family. As to quaternary structure, interacts with UvrB in an incision complex.

The protein resides in the cytoplasm. In terms of biological role, the UvrABC repair system catalyzes the recognition and processing of DNA lesions. UvrC both incises the 5' and 3' sides of the lesion. The N-terminal half is responsible for the 3' incision and the C-terminal half is responsible for the 5' incision. The chain is UvrABC system protein C from Nitrosospira multiformis (strain ATCC 25196 / NCIMB 11849 / C 71).